Here is a 380-residue protein sequence, read N- to C-terminus: MKKIILLGATGSIGTQTLAIIRENPEKFQLVALSFGRNMERGRAIIQEFKPKMVAVWHTRDRITLESEFPNVKFFNGLEGLREVATYLDGDVLLNAVMGSVGLLPTLDAIEAGKSIAIANKETLVTAGHIVMRAAREKNISLLPVDSEHSAILQALNGENPERIEKLVLTASGGSFRDKTRGELSEVTVKEALKHPNWNMGNKLTIDSATMFNKGLEVMEAHWLFGVDYDDIEVVIQRESIVHSMVQFVDGSFIAQLGTPDMRMPIQYALTYPDRLFIPYEKNFRITDFSALHFEKVDYERFPALKLAYNAGKIGGTMPTVLNAANEIAVAGFLNGQVAFYNIEALVENALNRHTSISEPDLDTILQVDQETRAYVKTLL.

Residues Thr-10, Gly-11, Ser-12, Ile-13, Gly-36, Arg-37, Asn-38, and Asn-120 each contribute to the NADPH site. 1-deoxy-D-xylulose 5-phosphate is bound at residue Lys-121. NADPH is bound at residue Glu-122. Residue Asp-146 coordinates Mn(2+). Residues Ser-147, Glu-148, Ser-172, and His-195 each contribute to the 1-deoxy-D-xylulose 5-phosphate site. A Mn(2+)-binding site is contributed by Glu-148. Gly-201 serves as a coordination point for NADPH. Ser-208, Asn-213, Lys-214, and Glu-217 together coordinate 1-deoxy-D-xylulose 5-phosphate. Position 217 (Glu-217) interacts with Mn(2+).

It belongs to the DXR family. It depends on Mg(2+) as a cofactor. The cofactor is Mn(2+).

The catalysed reaction is 2-C-methyl-D-erythritol 4-phosphate + NADP(+) = 1-deoxy-D-xylulose 5-phosphate + NADPH + H(+). The protein operates within isoprenoid biosynthesis; isopentenyl diphosphate biosynthesis via DXP pathway; isopentenyl diphosphate from 1-deoxy-D-xylulose 5-phosphate: step 1/6. In terms of biological role, catalyzes the NADPH-dependent rearrangement and reduction of 1-deoxy-D-xylulose-5-phosphate (DXP) to 2-C-methyl-D-erythritol 4-phosphate (MEP). The chain is 1-deoxy-D-xylulose 5-phosphate reductoisomerase from Listeria welshimeri serovar 6b (strain ATCC 35897 / DSM 20650 / CCUG 15529 / CIP 8149 / NCTC 11857 / SLCC 5334 / V8).